A 397-amino-acid chain; its full sequence is S-adenosylmethionine synthase (397 aa).

His-16 is a binding site for ATP. Position 18 (Asp-18) interacts with Mg(2+). Residue Glu-44 participates in K(+) binding. L-methionine-binding residues include Glu-57 and Gln-100. The segment at 100 to 110 (QSPDIAQGVNE) is flexible loop. ATP is bound by residues 175-177 (DAK), 242-243 (RF), Asp-251, 257-258 (RK), Ala-274, and Lys-278. Position 251 (Asp-251) interacts with L-methionine. Lys-282 is a binding site for L-methionine.

Belongs to the AdoMet synthase family. As to quaternary structure, homotetramer; dimer of dimers. Mg(2+) is required as a cofactor. Requires K(+) as cofactor.

It localises to the cytoplasm. The enzyme catalyses L-methionine + ATP + H2O = S-adenosyl-L-methionine + phosphate + diphosphate. The protein operates within amino-acid biosynthesis; S-adenosyl-L-methionine biosynthesis; S-adenosyl-L-methionine from L-methionine: step 1/1. In terms of biological role, catalyzes the formation of S-adenosylmethionine (AdoMet) from methionine and ATP. The overall synthetic reaction is composed of two sequential steps, AdoMet formation and the subsequent tripolyphosphate hydrolysis which occurs prior to release of AdoMet from the enzyme. The chain is S-adenosylmethionine synthase from Streptococcus thermophilus (strain CNRZ 1066).